A 255-amino-acid polypeptide reads, in one-letter code: MAVQTFPNEIVFFDLETNVPNKAGQHFHILEFGAIIVCPKKLEELESFTTLIQPKDLSVVSIRSSRSDGITRAKVTNAPSFEDVAEKIHGLLNGRIWAGHNIRRFDCVRIKEAFAEIGKAAPEPSGIIDSLGLLSDKFGKRAGNMKMASLAAYFGLGVQKHRSLDDVRMNLEVLKHCATVLFLESTLPNHLEGKWHTSSKIMTRSRRNYQIAQRAMPYSKGSLEKMTQNVKNLLSKAQGNQTLQSLINHSHSLLR.

The Exonuclease domain occupies 11–174 (VFFDLETNVP…DDVRMNLEVL (164 aa)). Mg(2+) is bound by residues Asp14 and Glu16. His161 serves as the catalytic Proton donor/acceptor. Asp166 is a Mg(2+) binding site.

Mg(2+) is required as a cofactor. In terms of tissue distribution, expressed in the sieve elements and phloem pole pericycle cells.

It localises to the nucleus. Its function is as follows. Probable exonuclease required for enuclation of sieve elements. The protein is Protein NEN4 of Arabidopsis thaliana (Mouse-ear cress).